The chain runs to 259 residues: PKHD-type hydroxylase PsycPRwf_1523 (259 aa).

Positions 80–180 constitute a Fe2OG dioxygenase domain; that stretch reads VIMPPLFSAY…RLAMVTWVQS (101 aa). 3 residues coordinate Fe cation: His-98, Asp-100, and His-161. 2-oxoglutarate is bound at residue Arg-171.

It depends on Fe(2+) as a cofactor. Requires L-ascorbate as cofactor.

The sequence is that of PKHD-type hydroxylase PsycPRwf_1523 from Psychrobacter sp. (strain PRwf-1).